Consider the following 226-residue polypeptide: Deoxyribose-phosphate aldolase (226 aa).

The Proton donor/acceptor role is filled by Asp-93. Lys-159 serves as the catalytic Schiff-base intermediate with acetaldehyde. The active-site Proton donor/acceptor is Lys-189.

It belongs to the DeoC/FbaB aldolase family. DeoC type 1 subfamily.

Its subcellular location is the cytoplasm. It carries out the reaction 2-deoxy-D-ribose 5-phosphate = D-glyceraldehyde 3-phosphate + acetaldehyde. It participates in carbohydrate degradation; 2-deoxy-D-ribose 1-phosphate degradation; D-glyceraldehyde 3-phosphate and acetaldehyde from 2-deoxy-alpha-D-ribose 1-phosphate: step 2/2. In terms of biological role, catalyzes a reversible aldol reaction between acetaldehyde and D-glyceraldehyde 3-phosphate to generate 2-deoxy-D-ribose 5-phosphate. The sequence is that of Deoxyribose-phosphate aldolase from Mycobacterium marinum (strain ATCC BAA-535 / M).